A 180-amino-acid chain; its full sequence is Beta-lactoglobulin-1 (180 aa).

Residues 1–18 form the signal peptide; that stretch reads MKCLLLALGLALMCGIQA. 2 disulfides stabilise this stretch: Cys-84/Cys-178 and Cys-124/Cys-137.

This sequence belongs to the calycin superfamily. Lipocalin family. In terms of assembly, monomer.

The protein resides in the secreted. In terms of biological role, lactoglobulin is the primary component of whey, it binds retinol and is probably involved in the transport of that molecule. The protein is Beta-lactoglobulin-1 (LGB1) of Equus caballus (Horse).